The chain runs to 108 residues: VQ motif-containing protein 10 (108 aa).

A VQ motif is present at residues 29 to 38; the sequence is FKTVVQELTG. A disordered region spans residues 65 to 85; the sequence is IGEDTRQLHGGGGGGGRMGTT. The segment covering 73-82 has biased composition (gly residues); sequence HGGGGGGGRM.

As to quaternary structure, interacts with WRKY25, WRKY26 and WRKY33.

The protein localises to the nucleus. Its function is as follows. May modulate WRKY transcription factor activities. This Arabidopsis thaliana (Mouse-ear cress) protein is VQ motif-containing protein 10.